The sequence spans 980 residues: Peroxisomal ATPase PEX6 (980 aa).

R119 carries the post-translational modification Omega-N-methylarginine. Residues 470–477 (GPPGSGKT) and 744–751 (GPPGTGKT) each bind ATP.

This sequence belongs to the AAA ATPase family. As to quaternary structure, interacts with PEX1; forming the PEX1-PEX6 AAA ATPase complex, which is composed of a heterohexamer formed by a trimer of PEX1-PEX6 dimers. Interacts with PEX26; interaction is direct and promotes recruitment to peroxisomal membranes. Interacts with ZFAND6.

The protein localises to the cytoplasm. It is found in the cytosol. Its subcellular location is the peroxisome membrane. It localises to the cell projection. The protein resides in the cilium. The protein localises to the photoreceptor outer segment. The catalysed reaction is ATP + H2O = ADP + phosphate + H(+). Its function is as follows. Component of the PEX1-PEX6 AAA ATPase complex, a protein dislocase complex that mediates the ATP-dependent extraction of the PEX5 receptor from peroxisomal membranes, an essential step for PEX5 recycling. Specifically recognizes PEX5 monoubiquitinated at 'Cys-11', and pulls it out of the peroxisome lumen through the PEX2-PEX10-PEX12 retrotranslocation channel. Extraction by the PEX1-PEX6 AAA ATPase complex is accompanied by unfolding of the TPR repeats and release of bound cargo from PEX5. This Cricetulus griseus (Chinese hamster) protein is Peroxisomal ATPase PEX6.